Here is a 564-residue protein sequence, read N- to C-terminus: Phosphoinositide phospholipase C 3 (564 aa).

An EF-hand domain is found at 19-54 (TRQPPVSIKRLFEAYSRNGKMSFDELLRFVSEVQGE). Residues 106 to 250 (HDMKAPLSHY…LKGKILISTK (145 aa)) form the PI-PLC X-box domain. Residues His121 and His167 contribute to the active site. The PI-PLC Y-box domain maps to 296-412 (RDLIAIHAAN…GYVKKPRILL (117 aa)). Residues 406 to 539 (KKPRILLDEH…KSGVRAVRLH (134 aa)) form the C2 domain. Asp450, Asp456, Asp509, Asp511, and Asp517 together coordinate Ca(2+).

Ca(2+) is required as a cofactor. In terms of tissue distribution, expressed in leaves, roots and siliques, but not in flowers.

The protein resides in the cell membrane. It carries out the reaction a 1,2-diacyl-sn-glycero-3-phospho-(1D-myo-inositol-4,5-bisphosphate) + H2O = 1D-myo-inositol 1,4,5-trisphosphate + a 1,2-diacyl-sn-glycerol + H(+). Its function is as follows. The production of the second messenger molecules diacylglycerol (DAG) and inositol 1,4,5-trisphosphate (IP3) is mediated by activated phosphatidylinositol-specific phospholipase C enzymes. This is Phosphoinositide phospholipase C 3 (PLC3) from Arabidopsis thaliana (Mouse-ear cress).